Here is a 380-residue protein sequence, read N- to C-terminus: Cytochrome b (380 aa).

The next 4 membrane-spanning stretches (helical) occupy residues 34–54 (FGSL…LLAA), 78–99 (WLIR…YLHI), 114–134 (WNTG…GYVL), and 179–199 (FFTL…IHLT). Residues His84 and His98 each contribute to the heme b site. The heme b site is built by His183 and His197. His202 serves as a coordination point for a ubiquinone. The next 4 membrane-spanning stretches (helical) occupy residues 227 to 247 (LKDI…ALFS), 289 to 309 (LGGV…PLLH), 321 to 341 (FSQL…WVGS), and 348 to 368 (FIII…ILFP).

This sequence belongs to the cytochrome b family. In terms of assembly, the cytochrome bc1 complex contains 11 subunits: 3 respiratory subunits (MT-CYB, CYC1 and UQCRFS1), 2 core proteins (UQCRC1 and UQCRC2) and 6 low-molecular weight proteins (UQCRH/QCR6, UQCRB/QCR7, UQCRQ/QCR8, UQCR10/QCR9, UQCR11/QCR10 and a cleavage product of UQCRFS1). This cytochrome bc1 complex then forms a dimer. Heme b is required as a cofactor.

It is found in the mitochondrion inner membrane. Functionally, component of the ubiquinol-cytochrome c reductase complex (complex III or cytochrome b-c1 complex) that is part of the mitochondrial respiratory chain. The b-c1 complex mediates electron transfer from ubiquinol to cytochrome c. Contributes to the generation of a proton gradient across the mitochondrial membrane that is then used for ATP synthesis. In Antigone rubicunda (Brolga crane), this protein is Cytochrome b (MT-CYB).